The chain runs to 188 residues: Ribosome maturation factor RimM (188 aa).

Positions 96–169 (DDEFYYADLE…TLLIDPLAAG (74 aa)) constitute a PRC barrel domain.

This sequence belongs to the RimM family. As to quaternary structure, binds ribosomal protein uS19.

Its subcellular location is the cytoplasm. In terms of biological role, an accessory protein needed during the final step in the assembly of 30S ribosomal subunit, possibly for assembly of the head region. Essential for efficient processing of 16S rRNA. May be needed both before and after RbfA during the maturation of 16S rRNA. It has affinity for free ribosomal 30S subunits but not for 70S ribosomes. This Rhizobium etli (strain ATCC 51251 / DSM 11541 / JCM 21823 / NBRC 15573 / CFN 42) protein is Ribosome maturation factor RimM.